The primary structure comprises 146 residues: UPF0735 ACT domain-containing protein Teth514_2312 (146 aa).

Positions 71–146 (TLSMVLDHMP…GVRKIEILGE (76 aa)) constitute an ACT domain.

It belongs to the UPF0735 family.

This chain is UPF0735 ACT domain-containing protein Teth514_2312, found in Thermoanaerobacter sp. (strain X514).